We begin with the raw amino-acid sequence, 417 residues long: Serine protease hepsin (417 aa).

At 1 to 23 (MAQKEGGRTVPCCSRPKVAALTA) the chain is on the cytoplasmic side. The chain crosses the membrane as a helical; Signal-anchor for type II membrane protein span at residues 24 to 44 (GTLLLLTAIGAASWAIVAVLL). Residues 45–417 (RSDQEPLYPV…SEASGMVTQL (373 aa)) lie on the Extracellular side of the membrane. In terms of domain architecture, SRCR spans 54 to 151 (VQVSSADARL…RGRFLAAICQ (98 aa)). 8 disulfides stabilise this stretch: cysteine 77–cysteine 140, cysteine 90–cysteine 150, cysteine 119–cysteine 138, cysteine 153–cysteine 277, cysteine 188–cysteine 204, cysteine 291–cysteine 359, cysteine 322–cysteine 338, and cysteine 349–cysteine 381. N-linked (GlcNAc...) asparagine glycosylation is present at asparagine 112. In terms of domain architecture, Peptidase S1 spans 163-405 (IVGGRDTSLG…FREWIFQAIK (243 aa)). Catalysis depends on charge relay system residues histidine 203 and aspartate 257. Serine 353 (charge relay system) is an active-site residue.

Belongs to the peptidase S1 family. In terms of tissue distribution, detected in liver and kidney.

The protein localises to the cell membrane. The protein resides in the apical cell membrane. It catalyses the reaction Cleavage after basic amino-acid residues, with Arg strongly preferred to Lys.. Functionally, serine protease that cleaves extracellular substrates, and contributes to the proteolytic processing of growth factors, such as HGF and MST1/HGFL. Plays a role in cell growth and maintenance of cell morphology. Plays a role in the proteolytic processing of ACE2. Mediates the proteolytic cleavage of urinary UMOD that is required for UMOD polymerization. This is Serine protease hepsin (HPN) from Homo sapiens (Human).